A 200-amino-acid chain; its full sequence is Protein OPI10 homolog (200 aa).

It belongs to the OPI10 family.

The protein resides in the cytoplasm. The protein localises to the nucleus envelope. In Schizosaccharomyces pombe (strain 972 / ATCC 24843) (Fission yeast), this protein is Protein OPI10 homolog.